The primary structure comprises 874 residues: Protein translocase subunit SecA (874 aa).

Residues Gln-85, 103–107 (GEGKT), and Asp-492 contribute to the ATP site. Over residues 839–854 (EEGPKKPYRREQKIGR) the composition is skewed to basic and acidic residues. The disordered stretch occupies residues 839–864 (EEGPKKPYRREQKIGRNDPCPCGSGK). Zn(2+)-binding residues include Cys-858, Cys-860, Cys-869, and Cys-870.

Belongs to the SecA family. In terms of assembly, monomer and homodimer. Part of the essential Sec protein translocation apparatus which comprises SecA, SecYEG and auxiliary proteins SecDF. Other proteins may also be involved. The cofactor is Zn(2+).

It localises to the cell membrane. The protein localises to the cytoplasm. The enzyme catalyses ATP + H2O + cellular proteinSide 1 = ADP + phosphate + cellular proteinSide 2.. Part of the Sec protein translocase complex. Interacts with the SecYEG preprotein conducting channel. Has a central role in coupling the hydrolysis of ATP to the transfer of proteins into and across the cell membrane, serving as an ATP-driven molecular motor driving the stepwise translocation of polypeptide chains across the membrane. The chain is Protein translocase subunit SecA from Carboxydothermus hydrogenoformans (strain ATCC BAA-161 / DSM 6008 / Z-2901).